A 579-amino-acid polypeptide reads, in one-letter code: Nif-specific regulatory protein (579 aa).

Residues 40-187 enclose the GAF domain; sequence DPVAEVPQIF…MVASLLEQAL (148 aa). The Sigma-54 factor interaction domain maps to 226–454; it reads IVGSSPAIAE…LENCVNRAAA (229 aa). ATP is bound by residues 254–261 and 317–326; these read GESGTGKE and ADGGTLFLDE. The segment at 464-536 is inter-domain linker; that stretch reads EELACRQGAC…PLRTKTAQLS (73 aa). A divalent metal cation-binding residues include C468 and C473. Residues 502–529 are disordered; the sequence is RVSAPPPEPAPAPEPAPEAPPREEVPLR. A run of 7 repeats spans residues 505 to 506, 507 to 508, 509 to 510, 511 to 512, 513 to 514, 515 to 516, and 517 to 518. A 7 X 2 AA tandem repeats of X-P region spans residues 505–518; that stretch reads APPPEPAPAPEPAP. A compositionally biased stretch (pro residues) spans 505-520; it reads APPPEPAPAPEPAPEA. The segment at 537–579 is C-terminal DNA-binding domain; that stretch reads REELLRALESAGWVQAKAARLLGMTPRQIAYALQKFEIELRKI. The segment at residues 551–570 is a DNA-binding region (H-T-H motif); it reads QAKAARLLGMTPRQIAYALQ.

In terms of assembly, interacts with sigma-54.

Required for activation of most nif operons, which are directly involved in nitrogen fixation. The polypeptide is Nif-specific regulatory protein (nifA1) (Rhodobacter capsulatus (Rhodopseudomonas capsulata)).